Here is a 470-residue protein sequence, read N- to C-terminus: Argininosuccinate lyase (470 aa).

Belongs to the lyase 1 family. Argininosuccinate lyase subfamily.

It localises to the cytoplasm. It catalyses the reaction 2-(N(omega)-L-arginino)succinate = fumarate + L-arginine. It functions in the pathway amino-acid biosynthesis; L-arginine biosynthesis; L-arginine from L-ornithine and carbamoyl phosphate: step 3/3. The sequence is that of Argininosuccinate lyase from Leptospira borgpetersenii serovar Hardjo-bovis (strain L550).